We begin with the raw amino-acid sequence, 157 residues long: Prefoldin subunit alpha (157 aa).

Belongs to the prefoldin subunit alpha family. As to quaternary structure, heterohexamer of two alpha and four beta subunits.

Its subcellular location is the cytoplasm. Molecular chaperone capable of stabilizing a range of proteins. Seems to fulfill an ATP-independent, HSP70-like function in archaeal de novo protein folding. This is Prefoldin subunit alpha from Methanopyrus kandleri (strain AV19 / DSM 6324 / JCM 9639 / NBRC 100938).